Here is a 49-residue protein sequence, read N- to C-terminus: Large ribosomal subunit protein bL33 (49 aa).

It belongs to the bacterial ribosomal protein bL33 family.

This chain is Large ribosomal subunit protein bL33, found in Carboxydothermus hydrogenoformans (strain ATCC BAA-161 / DSM 6008 / Z-2901).